Reading from the N-terminus, the 291-residue chain is ATP synthase gamma chain (291 aa).

This sequence belongs to the ATPase gamma chain family. As to quaternary structure, F-type ATPases have 2 components, CF(1) - the catalytic core - and CF(0) - the membrane proton channel. CF(1) has five subunits: alpha(3), beta(3), gamma(1), delta(1), epsilon(1). CF(0) has three main subunits: a, b and c.

It localises to the cell inner membrane. Produces ATP from ADP in the presence of a proton gradient across the membrane. The gamma chain is believed to be important in regulating ATPase activity and the flow of protons through the CF(0) complex. This chain is ATP synthase gamma chain, found in Rhodopseudomonas palustris (strain BisB5).